Reading from the N-terminus, the 334-residue chain is tRNA-cytidine(32) 2-sulfurtransferase (334 aa).

A PP-loop motif motif is present at residues 74-79; the sequence is SGGKDS. Positions 149, 152, and 240 each coordinate [4Fe-4S] cluster.

This sequence belongs to the TtcA family. Homodimer. The cofactor is Mg(2+). [4Fe-4S] cluster serves as cofactor.

The protein resides in the cytoplasm. The catalysed reaction is cytidine(32) in tRNA + S-sulfanyl-L-cysteinyl-[cysteine desulfurase] + AH2 + ATP = 2-thiocytidine(32) in tRNA + L-cysteinyl-[cysteine desulfurase] + A + AMP + diphosphate + H(+). It functions in the pathway tRNA modification. Its function is as follows. Catalyzes the ATP-dependent 2-thiolation of cytidine in position 32 of tRNA, to form 2-thiocytidine (s(2)C32). The sulfur atoms are provided by the cysteine/cysteine desulfurase (IscS) system. The chain is tRNA-cytidine(32) 2-sulfurtransferase from Burkholderia ambifaria (strain ATCC BAA-244 / DSM 16087 / CCUG 44356 / LMG 19182 / AMMD) (Burkholderia cepacia (strain AMMD)).